We begin with the raw amino-acid sequence, 106 residues long: Cytochrome c oxidase assembly protein COX16 homolog, mitochondrial (106 aa).

Topologically, residues 1 to 15 (MIAPAVLRALRKNKT) are mitochondrial matrix. A helical membrane pass occupies residues 16–33 (LRYGVPMLLLVVGGSFGL). The Mitochondrial intermembrane segment spans residues 34 to 106 (REFSQIRYDA…NPETLKPKTT (73 aa)). A disordered region spans residues 81–106 (IRGPRPWEDPQLLQGRNPETLKPKTT).

Belongs to the COX16 family. Associates with the MITRAC complex. Interacts with MT-CO2/COX; specifically interacts with newly synthesized MT-CO2/COX. Interacts with SCO1, SCO2 and COA6.

Its subcellular location is the mitochondrion inner membrane. In terms of biological role, required for the assembly of the mitochondrial respiratory chain complex IV (CIV), also known as cytochrome c oxidase. Promotes the insertion of copper into the active site of cytochrome c oxidase subunit II (MT-CO2/COX2). Interacts specifically with newly synthesized MT-CO2/COX and its copper center-forming metallochaperones SCO1, SCO2 and COA6. Probably facilitates MT-CO2/COX2 association with the MITRAC assembly intermediate containing MT-CO1/COX1, thereby participating in merging the MT-CO1/COX1 and MT-CO2/COX2 assembly lines. The polypeptide is Cytochrome c oxidase assembly protein COX16 homolog, mitochondrial (Mus musculus (Mouse)).